Consider the following 249-residue polypeptide: Proteasome subunit alpha type-7 (249 aa).

It belongs to the peptidase T1A family. In terms of assembly, the 26S proteasome consists of a 20S proteasome core and two 19S regulatory subunits. The 20S proteasome core is composed of 28 subunits that are arranged in four stacked rings, resulting in a barrel-shaped structure. The two end rings are each formed by seven alpha subunits, and the two central rings are each formed by seven beta subunits. The catalytic chamber with the active sites is on the inside of the barrel.

Its subcellular location is the cytoplasm. The protein resides in the nucleus. The proteasome is a multicatalytic proteinase complex which is characterized by its ability to cleave peptides with Arg, Phe, Tyr, Leu, and Glu adjacent to the leaving group at neutral or slightly basic pH. The proteasome has an ATP-dependent proteolytic activity. The polypeptide is Proteasome subunit alpha type-7 (PAD1) (Cicer arietinum (Chickpea)).